The chain runs to 188 residues: SAYSvFN domain-containing protein 1 (188 aa).

The span at 1–10 shows a compositional bias: basic and acidic residues; sequence MEQRLAEFRE. Disordered regions lie at residues 1–43 and 60–80; these read MEQR…ATPK and AIAQ…PEST. At 1–100 the chain is on the cytoplasmic side; the sequence is MEQRLAEFRE…SFLTNITFLK (100 aa). 2 stretches are compositionally biased toward low complexity: residues 22-43 and 60-75; these read STSS…ATPK and AIAQ…AGQQ. The segment at 86–100 is middle helical (MH); the sequence is SSCRQSFLTNITFLK. Positions 101–121 form an intramembrane region, helical; sequence VLLWLVLLGLFVELEFGLAYF. Topologically, residues 122–188 are cytoplasmic; the sequence is VLSMFYWMYV…RTSPSCSSYP (67 aa).

This sequence belongs to the SAYSD1 family. In terms of assembly, associates (via N-terminus) with ribosomes. As to expression, enriched in testis; predominantly expressed in round and elongating spermatids.

The protein resides in the endoplasmic reticulum membrane. Its subcellular location is the cytoplasmic vesicle membrane. In terms of biological role, ufmylation 'reader' component of a translocation-associated quality control pathway, a mechanism that takes place when a ribosome has stalled during translation, and which is required to degrade clogged substrates. Specifically recognizes and binds ufmylated ribosomes when a ribosome has stalled, promoting the transport of stalled nascent chain via the TRAPP complex to lysosomes for degradation. The chain is SAYSvFN domain-containing protein 1 from Mus musculus (Mouse).